Here is a 597-residue protein sequence, read N- to C-terminus: tRNA uridine 5-carboxymethylaminomethyl modification enzyme MnmG (597 aa).

Residue 10 to 15 (GGGHAG) coordinates FAD. Residue 267 to 281 (GPRYCPSIEDKVVRF) coordinates NAD(+).

It belongs to the MnmG family. Homodimer. Heterotetramer of two MnmE and two MnmG subunits. It depends on FAD as a cofactor.

Its subcellular location is the cytoplasm. Functionally, NAD-binding protein involved in the addition of a carboxymethylaminomethyl (cmnm) group at the wobble position (U34) of certain tRNAs, forming tRNA-cmnm(5)s(2)U34. The polypeptide is tRNA uridine 5-carboxymethylaminomethyl modification enzyme MnmG (Thermus thermophilus (strain ATCC BAA-163 / DSM 7039 / HB27)).